We begin with the raw amino-acid sequence, 181 residues long: Large ribosomal subunit protein uL5 (181 aa).

The protein belongs to the universal ribosomal protein uL5 family. Part of the 50S ribosomal subunit; part of the 5S rRNA/L5/L18/L25 subcomplex. Contacts the 5S rRNA and the P site tRNA. Forms a bridge to the 30S subunit in the 70S ribosome.

This is one of the proteins that bind and probably mediate the attachment of the 5S RNA into the large ribosomal subunit, where it forms part of the central protuberance. In the 70S ribosome it contacts protein S13 of the 30S subunit (bridge B1b), connecting the 2 subunits; this bridge is implicated in subunit movement. Contacts the P site tRNA; the 5S rRNA and some of its associated proteins might help stabilize positioning of ribosome-bound tRNAs. This is Large ribosomal subunit protein uL5 from Baumannia cicadellinicola subsp. Homalodisca coagulata.